We begin with the raw amino-acid sequence, 102 residues long: MYAIIETGGKQIKVEAGQEIYVEKLAGEVGDVITFDKVLFVGGDSAKVGVPFVEGATVTAKVEKQGRAKKLTVYKYKPKKNYHKKQGHRQPYTKLTIDAINA.

It belongs to the bacterial ribosomal protein bL21 family. Part of the 50S ribosomal subunit. Contacts protein L20.

In terms of biological role, this protein binds to 23S rRNA in the presence of protein L20. This chain is Large ribosomal subunit protein bL21, found in Listeria monocytogenes serotype 4b (strain CLIP80459).